Consider the following 936-residue polypeptide: MEEQFTNQKKVSHLQSLMNTKRSEQPTEFAKKHRFKDTLALFLVFLSFNHFTSLCLLVSFIVATKCKDFLANCFIILFLSKKPSRHIGEVAHIDISTSKVTNGSSNRKSNSRFFGNSKNSFVIPIPVLICEILFAMLLKIYGGDYFVKPIKNLAISIIASFLINDPSDCLSYATSCSVLYAVSTNTFQRVSHFFDIIQLFDMSLRGTGQSIKLFTVFRKYSQFFKKLFSLFLPMPFKMLGKHSDSMIYYLSFHILFFSFASSLLHPHRQTAENKPLKKGFNSTKPDVARVQGLQKMRISSSSSVSADSNTLEDQSPMIPNDPGGLSSSNQTIHPSQQNNSPVPLSSHSNILNPAASYPTDATSSFPYFTSMVKEYKSYQPSVISAEGSNSQAVTTTTSTTTSPTTFNFSGDNTSLSNEISLSDSSNGNSKKDSDFFSPSNDKYTNQLFELNVDFGNMFSSSKLSSDISVTSNLENFIRLLFRRKNQHLIAPLWSMVVTLKTTNFEKKYLQETSENSLTPTNSNTSYVSNQEKHDKDLDTINTHSVSSRISFTHAGKFKKSVFNNFEPSNTMALIAKTTSDDYNLLNLVSTNENIFNRNDNDYKVCIIDISTNSITFHIENLHDGELIVLVNGVIWSEVSCALILEHVGEEYVVVNGLVPSCSYDIQFINRLNHRDDYLVSDLIVRTCGNNNAIAGKFENLDFSFPSYYHRKFLSPLLTLKHSVLTTNANLSDERTKLKKTKKEFSKKLSLLRQEIDYFKGRISQNATHDEKSTLKVENLKVALQQSETAVNKLEMQLKTLTEKELELEEEYLKKKDLHLKNQLEFSKLEESLSKDLKNSEGRFQKVNQELVQLGSKLDKLNARNEKLQKEVDQNAEEIEKFSTQFLSKREKDRFRRKEYRIREANKFELTIKGLEQDINRLENENENIHSLIGNSY.

The Lumenal segment spans residues 1–41 (MEEQFTNQKKVSHLQSLMNTKRSEQPTEFAKKHRFKDTLAL). Residue Lys10 forms a Glycyl lysine isopeptide (Lys-Gly) (interchain with G-Cter in ubiquitin) linkage. Residues 42 to 62 (FLVFLSFNHFTSLCLLVSFIV) form a helical membrane-spanning segment. At 63–120 (ATKCKDFLANCFIILFLSKKPSRHIGEVAHIDISTSKVTNGSSNRKSNSRFFGNSKNS) the chain is on the cytoplasmic side. Residues 121–141 (FVIPIPVLICEILFAMLLKIY) form a helical membrane-spanning segment. Residues 142 to 245 (GGDYFVKPIK…FKMLGKHSDS (104 aa)) are Lumenal-facing. Residues 246–266 (MIYYLSFHILFFSFASSLLHP) form a helical membrane-spanning segment. The Cytoplasmic portion of the chain corresponds to 267–936 (HRQTAENKPL…NIHSLIGNSY (670 aa)). 3 disordered regions span residues 297–351 (RISS…SNIL), 387–437 (GSNS…DFFS), and 512–533 (TSENSLTPTNSNTSYVSNQEKH). A compositionally biased stretch (low complexity) spans 299–308 (SSSSSVSADS). The span at 325 to 351 (LSSSNQTIHPSQQNNSPVPLSSHSNIL) shows a compositional bias: polar residues. Low complexity-rich tracts occupy residues 394–405 (TTTTSTTTSPTT) and 414–428 (SLSNEISLSDSSNGN). A compositionally biased stretch (polar residues) spans 512-529 (TSENSLTPTNSNTSYVSN).

It localises to the endoplasmic reticulum membrane. This is Protein NNF2 (NNF2) from Saccharomyces cerevisiae (strain ATCC 204508 / S288c) (Baker's yeast).